Here is a 317-residue protein sequence, read N- to C-terminus: Ribosomal protein L11 methyltransferase (317 aa).

Thr-158, Gly-179, Asp-201, and Asn-244 together coordinate S-adenosyl-L-methionine.

This sequence belongs to the methyltransferase superfamily. PrmA family.

The protein resides in the cytoplasm. The catalysed reaction is L-lysyl-[protein] + 3 S-adenosyl-L-methionine = N(6),N(6),N(6)-trimethyl-L-lysyl-[protein] + 3 S-adenosyl-L-homocysteine + 3 H(+). Functionally, methylates ribosomal protein L11. The polypeptide is Ribosomal protein L11 methyltransferase (Lactococcus lactis subsp. cremoris (strain SK11)).